The following is a 498-amino-acid chain: MRINPTTSGPGVSTLEEKNLGRIAQIIGPVLDVVFPPGKMPNIYNALVVKGRDTVGQQINVTCEVQQLLGNNRVRAVAMSATDGLMRGMEVIDTGAPLSVPVGGATLGRIFNVLGEPVDNLGPVDTRTTSPIHRSAPAFIQLDTRLSIFETGIKVVDLLAPYRRGGKIGLFGGAGVGKTVLIMELINNIAKAHGGVSVFGGVGERTREGNDLYMEMKESGVINEENIAESKVALVHGQMNEPPGARMRVGLTALTMAEYFRDVNEQDVLLFIDNIFRFVQAGSEVSALLGRMPSAVGYQPTLSTEMGSLQERITSTKEGSITSIQAVYVPADDLTDPAPATTFAHLDATTVLSRGLAAKGIYPAVDPLDSTSTMLQPRIVGEEHYETAQRVKQTSQRYKELQDIIAILGSDELSEEDRLTVARARKIERFLSQPFFVAEVFTGSPGKYVGLAETIRGFQLILSGELDGLPEQAFYLVGNIDEATAKAMNLDVESKLKK.

172–179 (GGAGVGKT) is a binding site for ATP.

It belongs to the ATPase alpha/beta chains family. In terms of assembly, F-type ATPases have 2 components, CF(1) - the catalytic core - and CF(0) - the membrane proton channel. CF(1) has five subunits: alpha(3), beta(3), gamma(1), delta(1), epsilon(1). CF(0) has four main subunits: a(1), b(1), b'(1) and c(9-12).

It localises to the plastid. The protein resides in the chloroplast thylakoid membrane. The catalysed reaction is ATP + H2O + 4 H(+)(in) = ADP + phosphate + 5 H(+)(out). In terms of biological role, produces ATP from ADP in the presence of a proton gradient across the membrane. The catalytic sites are hosted primarily by the beta subunits. This chain is ATP synthase subunit beta, chloroplastic, found in Drimys granadensis.